A 292-amino-acid polypeptide reads, in one-letter code: Hemin import ATP-binding protein HmuV (292 aa).

Residues Leu-38–Pro-271 form the ABC transporter domain. Gly-70–Ser-77 is an ATP binding site.

The protein belongs to the ABC transporter superfamily. Heme (hemin) importer (TC 3.A.1.14.5) family. In terms of assembly, the complex is composed of two ATP-binding proteins (HmuV), two transmembrane proteins (HmuU) and a solute-binding protein (HmuT).

It localises to the cell membrane. Part of the ABC transporter complex HmuTUV involved in hemin import. Responsible for energy coupling to the transport system. This is Hemin import ATP-binding protein HmuV from Rhodococcus jostii (strain RHA1).